The following is a 256-amino-acid chain: Thiazole synthase (256 aa).

Residue K95 is the Schiff-base intermediate with DXP of the active site. Residues G156, 182-183 (AG), and 204-205 (NT) contribute to the 1-deoxy-D-xylulose 5-phosphate site.

The protein belongs to the ThiG family. Homotetramer. Forms heterodimers with either ThiH or ThiS.

The protein localises to the cytoplasm. It carries out the reaction [ThiS sulfur-carrier protein]-C-terminal-Gly-aminoethanethioate + 2-iminoacetate + 1-deoxy-D-xylulose 5-phosphate = [ThiS sulfur-carrier protein]-C-terminal Gly-Gly + 2-[(2R,5Z)-2-carboxy-4-methylthiazol-5(2H)-ylidene]ethyl phosphate + 2 H2O + H(+). It participates in cofactor biosynthesis; thiamine diphosphate biosynthesis. Catalyzes the rearrangement of 1-deoxy-D-xylulose 5-phosphate (DXP) to produce the thiazole phosphate moiety of thiamine. Sulfur is provided by the thiocarboxylate moiety of the carrier protein ThiS. In vitro, sulfur can be provided by H(2)S. This Klebsiella pneumoniae (strain 342) protein is Thiazole synthase.